The chain runs to 344 residues: MLDNIHNLHKEATDKILSTSSLEELENIRSAYFGKSGFITVYLRNISTIKNLEERKSVGNVVNTIYSELKSLINSHRTKLHQIQIDNQLLQDKVDISLPIRPQKIGKLHPISNVLNEVKRIFLSLGFKLYDGPELEDEFHVFDALNTNKNHPAREENDTFYLKTLVNNKRVVLRTHTSSVQIRTMENNDGIYPIKVIAPGKVYRNDWDATHSPMFHQIEGLYIDKNINMGHLKYCINYFLNKFFGKNVQIRFRNSYFPFTEPSAEVDIKCNQNDWIEILGCGMVHSNVLTNVNIDPNQYSGFAFGIGIERITMLKYNISDLRKFYTNNLQWLDHYGFHFTHLTI.

Glu-261 lines the Mg(2+) pocket.

The protein belongs to the class-II aminoacyl-tRNA synthetase family. Phe-tRNA synthetase alpha subunit type 1 subfamily. As to quaternary structure, tetramer of two alpha and two beta subunits. The cofactor is Mg(2+).

It is found in the cytoplasm. The enzyme catalyses tRNA(Phe) + L-phenylalanine + ATP = L-phenylalanyl-tRNA(Phe) + AMP + diphosphate + H(+). This chain is Phenylalanine--tRNA ligase alpha subunit, found in Ehrlichia ruminantium (strain Gardel).